Reading from the N-terminus, the 79-residue chain is MGGFTSIWHWVIVLLVIVLLFGAKKIPELAKGLGSGIKNFKKAVKDDEEEAKNEPKTLDAQVTQAKVHESSEIKNKQEG.

The chain crosses the membrane as a helical span at residues 1 to 21 (MGGFTSIWHWVIVLLVIVLLF). The interval 48–79 (EEEAKNEPKTLDAQVTQAKVHESSEIKNKQEG) is disordered. A compositionally biased stretch (basic and acidic residues) spans 66–79 (KVHESSEIKNKQEG).

The protein belongs to the TatA/E family. In terms of assembly, the Tat system comprises two distinct complexes: a TatABC complex, containing multiple copies of TatA, TatB and TatC subunits, and a separate TatA complex, containing only TatA subunits. Substrates initially bind to the TatABC complex, which probably triggers association of the separate TatA complex to form the active translocon.

The protein resides in the cell inner membrane. Part of the twin-arginine translocation (Tat) system that transports large folded proteins containing a characteristic twin-arginine motif in their signal peptide across membranes. TatA could form the protein-conducting channel of the Tat system. The protein is Sec-independent protein translocase protein TatA of Helicobacter acinonychis (strain Sheeba).